Consider the following 141-residue polypeptide: VLTAEDRRLLQASVGKLGCRLEDIGADALNRLLITFPQSKTYFSHFNLSPGSKDIIHQGEKVGKALDSALKHLDDIRGTLSQLSDLHAYNLRVDPVNFQLLSKCIHVSLATHLRNEYSASVTLAWDKFLELVADVLSEKYR.

The 141-residue stretch at 1–141 (VLTAEDRRLL…VADVLSEKYR (141 aa)) folds into the Globin domain. Residues H57 and H87 each contribute to the heme b site.

The protein belongs to the globin family. The deoxy-Hb is a heterotetramer of two alpha and two beta chains, but oxygenation results in dissociation to dimers. In terms of tissue distribution, red blood cells.

Involved in oxygen transport from the lung to the various peripheral tissues. This Erythrolamprus miliaris (South American water snake) protein is Hemoglobin subunit alpha-D (HBAD).